Reading from the N-terminus, the 216-residue chain is Probable nicotinate-nucleotide adenylyltransferase (216 aa).

It belongs to the NadD family.

The catalysed reaction is nicotinate beta-D-ribonucleotide + ATP + H(+) = deamido-NAD(+) + diphosphate. It functions in the pathway cofactor biosynthesis; NAD(+) biosynthesis; deamido-NAD(+) from nicotinate D-ribonucleotide: step 1/1. Functionally, catalyzes the reversible adenylation of nicotinate mononucleotide (NaMN) to nicotinic acid adenine dinucleotide (NaAD). This chain is Probable nicotinate-nucleotide adenylyltransferase, found in Shewanella baltica (strain OS223).